A 138-amino-acid chain; its full sequence is Transcription factor Atoh7-a (138 aa).

In terms of domain architecture, bHLH spans 33–85 (KRRLAANARERRRMQGLNTAFDSLRKVVPQWGEDKQLSKYETLQMALSYIMAL).

Its subcellular location is the nucleus. It localises to the perikaryon. The protein localises to the cell projection. It is found in the axon. Transcription factor that binds to DNA at the consensus sequence 5'-CAG[GC]TG-3'. Positively regulates the determination of retinal ganglion cell fate and formation of the optic nerve and retino-hypothalamic tract. Required for retinal circadian rhythm photoentrainment. Plays a role in brainstem auditory signaling and binaural processing. Regulates the differentiation of olfactory receptor neurons. During retinal neurogenesis, activates the transcription of several genes such as brn3d, coe3, cbfa2t2, glis2, elrC and xgadd45-gamma. This chain is Transcription factor Atoh7-a, found in Xenopus laevis (African clawed frog).